A 517-amino-acid polypeptide reads, in one-letter code: uncharacterized protein (517 aa).

The next 10 membrane-spanning stretches (helical) occupy residues 35-55 (FSLIVLSFIVSFFLIVAIPGI), 81-101 (IAIYTLAALAFSFCMSVGVFN), 102-122 (IGISGQMMAGANFGFMMILKV), 135-155 (IITILLMILGSVTVAMVVAAL), 164-184 (VVSAIMLNWVIVLVSAYLVGT), 223-243 (LVIAIAAAIFIAVLMKFTVFG), 268-288 (FLSFVISGILSGLLAAVVYTA), 302-322 (FGITSVPITGFDGIAIGLIAL), 328-348 (IVIVSTIISFVTIGAKPAGLN), and 352-372 (ASLVLGIMMYFAAIYNLMIYI).

The protein resides in the cell membrane. This is an uncharacterized protein from Mycoplasma pneumoniae (strain ATCC 29342 / M129 / Subtype 1) (Mycoplasmoides pneumoniae).